Reading from the N-terminus, the 132-residue chain is Small ribosomal subunit protein uS11c (132 aa).

Belongs to the universal ribosomal protein uS11 family. In terms of assembly, part of the 30S ribosomal subunit.

The protein localises to the plastid. It is found in the chloroplast. The protein is Small ribosomal subunit protein uS11c of Gnetum parvifolium (Small-leaved jointfir).